The chain runs to 147 residues: Gastrula-specific protein 17 (147 aa).

The segment at 1–119 (MSQNLDFLAL…TQVYGNHQPG (119 aa)) is disordered. Polar residues-rich tracts occupy residues 20 to 36 (SPTS…STPP), 45 to 57 (RQIS…YTNP), and 74 to 88 (LLQN…SPTA).

The chain is Gastrula-specific protein 17 (gs17) from Xenopus laevis (African clawed frog).